Consider the following 426-residue polypeptide: Glutamate-1-semialdehyde 2,1-aminomutase (426 aa).

N6-(pyridoxal phosphate)lysine is present on K265.

This sequence belongs to the class-III pyridoxal-phosphate-dependent aminotransferase family. HemL subfamily. Homodimer. Requires pyridoxal 5'-phosphate as cofactor.

It is found in the cytoplasm. It carries out the reaction (S)-4-amino-5-oxopentanoate = 5-aminolevulinate. It participates in porphyrin-containing compound metabolism; protoporphyrin-IX biosynthesis; 5-aminolevulinate from L-glutamyl-tRNA(Glu): step 2/2. The chain is Glutamate-1-semialdehyde 2,1-aminomutase from Erwinia tasmaniensis (strain DSM 17950 / CFBP 7177 / CIP 109463 / NCPPB 4357 / Et1/99).